A 483-amino-acid chain; its full sequence is Probable glycine dehydrogenase (decarboxylating) subunit 2 (483 aa).

Residue K264 is modified to N6-(pyridoxal phosphate)lysine.

This sequence belongs to the GcvP family. C-terminal subunit subfamily. The glycine cleavage system is composed of four proteins: P, T, L and H. In this organism, the P 'protein' is a heterodimer of two subunits. Pyridoxal 5'-phosphate serves as cofactor.

The enzyme catalyses N(6)-[(R)-lipoyl]-L-lysyl-[glycine-cleavage complex H protein] + glycine + H(+) = N(6)-[(R)-S(8)-aminomethyldihydrolipoyl]-L-lysyl-[glycine-cleavage complex H protein] + CO2. Its function is as follows. The glycine cleavage system catalyzes the degradation of glycine. The P protein binds the alpha-amino group of glycine through its pyridoxal phosphate cofactor; CO(2) is released and the remaining methylamine moiety is then transferred to the lipoamide cofactor of the H protein. This chain is Probable glycine dehydrogenase (decarboxylating) subunit 2, found in Nitrosomonas eutropha (strain DSM 101675 / C91 / Nm57).